The sequence spans 321 residues: Probable pectate lyase A (321 aa).

The first 20 residues, 1 to 20, serve as a signal peptide directing secretion; sequence MANFKLFLALAACLSGQALA. Asn93 carries an N-linked (GlcNAc...) asparagine glycan. Ca(2+) contacts are provided by Asp134, Asp163, and Asp167. Arg220 is an active-site residue.

The protein belongs to the polysaccharide lyase 1 family. It depends on Ca(2+) as a cofactor.

It localises to the secreted. It catalyses the reaction Eliminative cleavage of (1-&gt;4)-alpha-D-galacturonan to give oligosaccharides with 4-deoxy-alpha-D-galact-4-enuronosyl groups at their non-reducing ends.. In terms of biological role, pectinolytic enzyme consist of four classes of enzymes: pectin lyase, polygalacturonase, pectin methylesterase and rhamnogalacturonase. Among pectinolytic enzymes, pectin lyase is the most important in depolymerization of pectin, since it cleaves internal glycosidic bonds of highly methylated pectins. Favors pectate, the anion, over pectin, the methyl ester. The sequence is that of Probable pectate lyase A (plyA) from Aspergillus flavus (strain ATCC 200026 / FGSC A1120 / IAM 13836 / NRRL 3357 / JCM 12722 / SRRC 167).